Consider the following 187-residue polypeptide: Phosphatidylethanolamine-binding protein 1 (187 aa).

Residues S6 and S13 each carry the phosphoserine modification. Residue T42 is modified to Phosphothreonine. Phosphoserine occurs at positions 52, 54, 98, and 153. The tract at residues 93-134 is interaction with RAF1; that stretch reads KGNDISSGTVLSDYVGSGPPKGTGLHRYVWLVYEQARPLKCD.

It belongs to the phosphatidylethanolamine-binding protein family. As to quaternary structure, has a tendency to form dimers by disulfide cross-linking. Interacts with RAF1 and this interaction is enhanced if RAF1 is phosphorylated on residues 'Ser-338', 'Ser-339', 'Tyr-340' and 'Tyr-341'. Interacts with ALOX15; in response to IL13/interleukin-13, prevents the interaction of PEBP1 with RAF1 to activate the ERK signaling cascade.

It is found in the cytoplasm. Its function is as follows. Binds ATP, opioids and phosphatidylethanolamine. Has lower affinity for phosphatidylinositol and phosphatidylcholine. Serine protease inhibitor which inhibits thrombin, neuropsin and chymotrypsin but not trypsin, tissue type plasminogen activator and elastase. Inhibits the kinase activity of RAF1 by inhibiting its activation and by dissociating the RAF1/MEK complex and acting as a competitive inhibitor of MEK phosphorylation. Functionally, HCNP may be involved in the function of the presynaptic cholinergic neurons of the central nervous system. HCNP increases the production of choline acetyltransferase but not acetylcholinesterase. Seems to be mediated by a specific receptor. This is Phosphatidylethanolamine-binding protein 1 (PEBP1) from Macaca fascicularis (Crab-eating macaque).